The following is a 482-amino-acid chain: MVESQKAMPQPKMGRIRRIHFVGIGGVGMCGIAEVLLNLGYEVSGSDLKASPVTERLESFGAEIFVGHRAENAASADVLVVSSAINPANPEVATALERRIPVVPRAEMLAELMRYRHGVAVAGTHGKTTTTSLLASVFAAGGLDPTFVIGGRLTAAGTNAQLGTSRYLIAEADESDASFLHLQPMVAVVTNIDADHMATYEGDFNKLKKTFVEFLHNLPFYGLAVMCLDDPVVREILPQVKRPTVTYGFSEEADIRAINVRQQGMQTHFTVLRRDCEPLEVSVNMPGNHNVLNALATIAIATDEGISDEAIVQGLSGFQGVGRRFQVYGELPVEGGSVMLVDDYGHHPTEVAAVIKAVRGGWPSRRLVIVYQPHRYSRTRDLYDDFVQVLGDANVLLLMEVYPAGEEPIPGADSRQLCHSIRQRGKLDPIYIERGAELAPLVKPLLRAGDILICQGAGDVGGLAPQLMKSPLFAGAKQEKSK.

Residue 123–129 (GTHGKTT) participates in ATP binding.

Belongs to the MurCDEF family.

The protein resides in the cytoplasm. The catalysed reaction is UDP-N-acetyl-alpha-D-muramate + L-alanine + ATP = UDP-N-acetyl-alpha-D-muramoyl-L-alanine + ADP + phosphate + H(+). It functions in the pathway cell wall biogenesis; peptidoglycan biosynthesis. Functionally, cell wall formation. The sequence is that of UDP-N-acetylmuramate--L-alanine ligase from Pseudomonas entomophila (strain L48).